We begin with the raw amino-acid sequence, 306 residues long: Acetyl-coenzyme A carboxylase carboxyl transferase subunit beta (306 aa).

Residues Leu-25–Thr-294 form the CoA carboxyltransferase N-terminal domain. Residues Phe-286–Ala-306 form a disordered region. A compositionally biased stretch (low complexity) spans Pro-288–Ala-306.

The protein belongs to the AccD/PCCB family. Acetyl-CoA carboxylase is a heterohexamer composed of biotin carboxyl carrier protein (AccB), biotin carboxylase (AccC) and two subunits each of ACCase subunit alpha (AccA) and ACCase subunit beta (AccD).

It is found in the cytoplasm. The enzyme catalyses N(6)-carboxybiotinyl-L-lysyl-[protein] + acetyl-CoA = N(6)-biotinyl-L-lysyl-[protein] + malonyl-CoA. It participates in lipid metabolism; malonyl-CoA biosynthesis; malonyl-CoA from acetyl-CoA: step 1/1. Its function is as follows. Component of the acetyl coenzyme A carboxylase (ACC) complex. Biotin carboxylase (BC) catalyzes the carboxylation of biotin on its carrier protein (BCCP) and then the CO(2) group is transferred by the transcarboxylase to acetyl-CoA to form malonyl-CoA. In Bartonella grahamii (strain as4aup), this protein is Acetyl-coenzyme A carboxylase carboxyl transferase subunit beta.